Here is a 305-residue protein sequence, read N- to C-terminus: UDP-3-O-acyl-N-acetylglucosamine deacetylase (305 aa).

Zn(2+) contacts are provided by histidine 79, histidine 238, and aspartate 242. Histidine 265 functions as the Proton donor in the catalytic mechanism.

This sequence belongs to the LpxC family. Zn(2+) serves as cofactor.

The enzyme catalyses a UDP-3-O-[(3R)-3-hydroxyacyl]-N-acetyl-alpha-D-glucosamine + H2O = a UDP-3-O-[(3R)-3-hydroxyacyl]-alpha-D-glucosamine + acetate. It participates in glycolipid biosynthesis; lipid IV(A) biosynthesis; lipid IV(A) from (3R)-3-hydroxytetradecanoyl-[acyl-carrier-protein] and UDP-N-acetyl-alpha-D-glucosamine: step 2/6. Functionally, catalyzes the hydrolysis of UDP-3-O-myristoyl-N-acetylglucosamine to form UDP-3-O-myristoylglucosamine and acetate, the committed step in lipid A biosynthesis. The sequence is that of UDP-3-O-acyl-N-acetylglucosamine deacetylase from Haemophilus influenzae (strain PittGG).